The primary structure comprises 105 residues: UPF0145 protein CPS_2458 (105 aa).

The protein belongs to the UPF0145 family.

This Colwellia psychrerythraea (strain 34H / ATCC BAA-681) (Vibrio psychroerythus) protein is UPF0145 protein CPS_2458.